Reading from the N-terminus, the 206-residue chain is Phosphoheptose isomerase (206 aa).

The SIS domain maps to 37 to 195 (LVDAFKAGKK…IEQKMDINNE (159 aa)). Residue 52–54 (NGG) coordinates substrate. Residues H61 and E65 each contribute to the Zn(2+) site. Substrate contacts are provided by residues E65, 93-94 (ND), 119-121 (STS), S124, and Q172. The Zn(2+) site is built by Q172 and H180.

The protein belongs to the SIS family. GmhA subfamily. As to quaternary structure, homotetramer. Requires Zn(2+) as cofactor.

Its subcellular location is the cytoplasm. It catalyses the reaction 2 D-sedoheptulose 7-phosphate = D-glycero-alpha-D-manno-heptose 7-phosphate + D-glycero-beta-D-manno-heptose 7-phosphate. The protein operates within carbohydrate biosynthesis; D-glycero-D-manno-heptose 7-phosphate biosynthesis; D-glycero-alpha-D-manno-heptose 7-phosphate and D-glycero-beta-D-manno-heptose 7-phosphate from sedoheptulose 7-phosphate: step 1/1. Catalyzes the isomerization of sedoheptulose 7-phosphate in D-glycero-D-manno-heptose 7-phosphate. This Hamiltonella defensa subsp. Acyrthosiphon pisum (strain 5AT) protein is Phosphoheptose isomerase.